A 358-amino-acid polypeptide reads, in one-letter code: Thiol protease aleurain-like (358 aa).

The N-terminal stretch at Met-1 to Ser-21 is a signal peptide. Positions Lys-22 to Thr-140 are cleaved as a propeptide — activation peptide. Asn-125 is a glycosylation site (N-linked (GlcNAc...) asparagine). Intrachain disulfides connect Cys-162–Cys-205 and Cys-196–Cys-238. The active site involves Cys-165. N-linked (GlcNAc...) asparagine glycosylation occurs at Asn-254. A disulfide bridge connects residues Cys-296 and Cys-346. Residues His-305 and Asn-325 contribute to the active site.

This sequence belongs to the peptidase C1 family.

The protein localises to the vacuole. It carries out the reaction Hydrolysis of proteins, acting as an aminopeptidase (notably, cleaving Arg-|-Xaa bonds) as well as an endopeptidase.. Functionally, may play a role in proteolysis leading to mobilization of nitrogen during senescence and starvation. The chain is Thiol protease aleurain-like from Arabidopsis thaliana (Mouse-ear cress).